The primary structure comprises 112 residues: Large ribosomal subunit protein bL20c (112 aa).

It belongs to the bacterial ribosomal protein bL20 family.

It is found in the plastid. The protein localises to the chloroplast. Binds directly to 23S ribosomal RNA and is necessary for the in vitro assembly process of the 50S ribosomal subunit. It is not involved in the protein synthesizing functions of that subunit. The chain is Large ribosomal subunit protein bL20c (rpl20) from Anthoceros angustus (Hornwort).